The chain runs to 506 residues: Cysteine--tRNA ligase (506 aa).

Cys-34 serves as a coordination point for Zn(2+). The 'HIGH' region motif lies at 36 to 46 (PTVYDFAHIGN). Cys-230, His-269, and Glu-273 together coordinate Zn(2+). Positions 302–306 (KMSKS) match the 'KMSKS' region motif. Lys-305 is an ATP binding site.

It belongs to the class-I aminoacyl-tRNA synthetase family. As to quaternary structure, monomer. The cofactor is Zn(2+).

The protein localises to the cytoplasm. It carries out the reaction tRNA(Cys) + L-cysteine + ATP = L-cysteinyl-tRNA(Cys) + AMP + diphosphate. The sequence is that of Cysteine--tRNA ligase from Brucella suis (strain ATCC 23445 / NCTC 10510).